Here is a 204-residue protein sequence, read N- to C-terminus: Large ribosomal subunit protein bL25 (204 aa).

This sequence belongs to the bacterial ribosomal protein bL25 family. CTC subfamily. As to quaternary structure, part of the 50S ribosomal subunit; part of the 5S rRNA/L5/L18/L25 subcomplex. Contacts the 5S rRNA. Binds to the 5S rRNA independently of L5 and L18.

This is one of the proteins that binds to the 5S RNA in the ribosome where it forms part of the central protuberance. The sequence is that of Large ribosomal subunit protein bL25 from Pseudomonas syringae pv. syringae (strain B728a).